Here is a 138-residue protein sequence, read N- to C-terminus: Basic phospholipase A2 Cvv-N6 (138 aa).

The signal sequence occupies residues 1 to 16 (MRTFWIVALLLVGVEG). 7 disulfides stabilise this stretch: Cys-42–Cys-131, Cys-44–Cys-60, Cys-59–Cys-111, Cys-65–Cys-138, Cys-66–Cys-104, Cys-73–Cys-97, and Cys-91–Cys-102. The Ca(2+) site is built by Tyr-43, Gly-45, and Gly-47. The active site involves His-63. A Ca(2+)-binding site is contributed by Asp-64. Asp-105 is a catalytic residue.

The protein belongs to the phospholipase A2 family. Group II subfamily. D49 sub-subfamily. Monomer. Binds to calmodulin. It depends on Ca(2+) as a cofactor. In terms of tissue distribution, expressed by the venom gland.

It is found in the secreted. It carries out the reaction a 1,2-diacyl-sn-glycero-3-phosphocholine + H2O = a 1-acyl-sn-glycero-3-phosphocholine + a fatty acid + H(+). Its activity is regulated as follows. Heparin and wedelolactone inhibit the myotoxic activity. The PLA2 inhibitor, para-bromophenacyl bromide (BPB), inhibits enzymatic and myotoxic activities. Functionally, snake venom phospholipase A2 (PLA2) that is myotoxic and displays moderate edema-inducing activity in rat paws. Does not show neurotoxic activity. PLA2 catalyzes the calcium-dependent hydrolysis of the 2-acyl groups in 3-sn-phosphoglycerides. This Crotalus viridis viridis (Prairie rattlesnake) protein is Basic phospholipase A2 Cvv-N6.